Consider the following 117-residue polypeptide: 16 kDa protein (117 aa).

The polypeptide is 16 kDa protein (Tobacco rattle virus (strain PLB)).